Reading from the N-terminus, the 336-residue chain is Fructokinase-2 (336 aa).

It belongs to the carbohydrate kinase PfkB family. In terms of tissue distribution, expressed in stem, sheaths, anthers, and panicles (at protein level).

It catalyses the reaction D-fructose + ATP = D-fructose 6-phosphate + ADP + H(+). It participates in glycan biosynthesis; starch biosynthesis. With respect to regulation, strongly inhibited at high fructose concentration. Its function is as follows. May play an important role in maintaining the flux of carbon towards starch formation in endosperm. May also be involved in a sugar-sensing pathway. The protein is Fructokinase-2 (FRK2) of Oryza sativa subsp. japonica (Rice).